The following is a 557-amino-acid chain: Dihydroxy-acid dehydratase (557 aa).

Position 78 (aspartate 78) interacts with Mg(2+). Residue cysteine 119 participates in [2Fe-2S] cluster binding. Mg(2+)-binding residues include aspartate 120 and lysine 121. Lysine 121 bears the N6-carboxylysine mark. Cysteine 192 is a binding site for [2Fe-2S] cluster. Glutamate 442 contacts Mg(2+). Serine 468 functions as the Proton acceptor in the catalytic mechanism.

Belongs to the IlvD/Edd family. As to quaternary structure, homodimer. [2Fe-2S] cluster is required as a cofactor. The cofactor is Mg(2+).

The catalysed reaction is (2R)-2,3-dihydroxy-3-methylbutanoate = 3-methyl-2-oxobutanoate + H2O. It catalyses the reaction (2R,3R)-2,3-dihydroxy-3-methylpentanoate = (S)-3-methyl-2-oxopentanoate + H2O. It participates in amino-acid biosynthesis; L-isoleucine biosynthesis; L-isoleucine from 2-oxobutanoate: step 3/4. It functions in the pathway amino-acid biosynthesis; L-valine biosynthesis; L-valine from pyruvate: step 3/4. Functionally, functions in the biosynthesis of branched-chain amino acids. Catalyzes the dehydration of (2R,3R)-2,3-dihydroxy-3-methylpentanoate (2,3-dihydroxy-3-methylvalerate) into 2-oxo-3-methylpentanoate (2-oxo-3-methylvalerate) and of (2R)-2,3-dihydroxy-3-methylbutanoate (2,3-dihydroxyisovalerate) into 2-oxo-3-methylbutanoate (2-oxoisovalerate), the penultimate precursor to L-isoleucine and L-valine, respectively. The protein is Dihydroxy-acid dehydratase of Bacillus cereus (strain ATCC 10987 / NRS 248).